The sequence spans 616 residues: Chaperone protein HscA (616 aa).

This sequence belongs to the heat shock protein 70 family.

Its function is as follows. Chaperone involved in the maturation of iron-sulfur cluster-containing proteins. Has a low intrinsic ATPase activity which is markedly stimulated by HscB. Involved in the maturation of IscU. The polypeptide is Chaperone protein HscA (Klebsiella pneumoniae subsp. pneumoniae (strain ATCC 700721 / MGH 78578)).